A 502-amino-acid chain; its full sequence is RNA polymerase sigma factor sigA (502 aa).

The N-terminal 23 residues, 1–23 (MATAAVIGLNTGKRLLSSSFYHS), are a transit peptide targeting the chloroplast. Over residues 57–71 (YSPSFPSSNRHTQSA) the composition is skewed to polar residues. The segment at 57–92 (YSPSFPSSNRHTQSAKALKESVDVASTEKPWLPNGT) is disordered. T170 is subject to Phosphothreonine. The Polymerase core binding motif lies at 287–300 (DLVQGGLIGLLRGI). A DNA-binding region (H-T-H motif) is located at residues 461 to 480 (WEDISKRIGLSRERVRQVGL).

This sequence belongs to the sigma-70 factor family. In terms of assembly, interacts with SIB1 in chloroplast. Binds to CSK. The phosphorylation of Thr-170 mediated by oxidative conditions of plastoquinone (PQ) changes the promoter specificity, selectively inhibiting the transcription of the psaA gene, which encodes a PS-I protein. Phosphorylation of the holoenzyme occurs in the dark. This phosphorylation in response to plastoquinone redox state modification is mediated by CSK. Highly expressed in leaves, and to a lesser extent in roots. Expressed in old seedlings (8 days), cotyledons, hypocotyls, leaves, sepals and siliques.

It localises to the plastid. The protein resides in the chloroplast. In terms of biological role, essential protein. Sigma factors are initiation factors that promote the attachment of plastid-encoded RNA polymerase (PEP) to specific initiation sites and are then released. Controls the transcription of the psaA gene and thus modulates photosystem stoichiometry. Thereby maintains a harmonious electron flow and photosynthetic efficiency. The sequence is that of RNA polymerase sigma factor sigA (SIGA) from Arabidopsis thaliana (Mouse-ear cress).